The chain runs to 259 residues: Ribonuclease HII (259 aa).

The region spanning 69–257 (VAVCGVDEVG…VLEESQGLIY (189 aa)) is the RNase H type-2 domain. D75, E76, and D167 together coordinate a divalent metal cation.

This sequence belongs to the RNase HII family. It depends on Mn(2+) as a cofactor. The cofactor is Mg(2+).

It localises to the cytoplasm. It carries out the reaction Endonucleolytic cleavage to 5'-phosphomonoester.. In terms of biological role, endonuclease that specifically degrades the RNA of RNA-DNA hybrids. The protein is Ribonuclease HII of Shouchella clausii (strain KSM-K16) (Alkalihalobacillus clausii).